The chain runs to 143 residues: Nucleoside diphosphate kinase (143 aa).

Residues lysine 11, phenylalanine 59, arginine 87, threonine 93, arginine 104, and asparagine 114 each contribute to the ATP site. Catalysis depends on histidine 117, which acts as the Pros-phosphohistidine intermediate.

The protein belongs to the NDK family. As to quaternary structure, homotetramer. It depends on Mg(2+) as a cofactor.

The protein localises to the cytoplasm. It catalyses the reaction a 2'-deoxyribonucleoside 5'-diphosphate + ATP = a 2'-deoxyribonucleoside 5'-triphosphate + ADP. The enzyme catalyses a ribonucleoside 5'-diphosphate + ATP = a ribonucleoside 5'-triphosphate + ADP. In terms of biological role, major role in the synthesis of nucleoside triphosphates other than ATP. The ATP gamma phosphate is transferred to the NDP beta phosphate via a ping-pong mechanism, using a phosphorylated active-site intermediate. The protein is Nucleoside diphosphate kinase of Salmonella arizonae (strain ATCC BAA-731 / CDC346-86 / RSK2980).